The primary structure comprises 93 residues: Large ribosomal subunit protein bL31B (93 aa).

It belongs to the bacterial ribosomal protein bL31 family. Type B subfamily. Part of the 50S ribosomal subunit.

The chain is Large ribosomal subunit protein bL31B from Pseudomonas syringae pv. tomato (strain ATCC BAA-871 / DC3000).